Here is a 513-residue protein sequence, read N- to C-terminus: ATP synthase subunit alpha 1 (513 aa).

169–176 (GDRQTGKT) provides a ligand contact to ATP.

It belongs to the ATPase alpha/beta chains family. F-type ATPases have 2 components, CF(1) - the catalytic core - and CF(0) - the membrane proton channel. CF(1) has five subunits: alpha(3), beta(3), gamma(1), delta(1), epsilon(1). CF(0) has three main subunits: a(1), b(2) and c(9-12). The alpha and beta chains form an alternating ring which encloses part of the gamma chain. CF(1) is attached to CF(0) by a central stalk formed by the gamma and epsilon chains, while a peripheral stalk is formed by the delta and b chains.

The protein resides in the cell inner membrane. It catalyses the reaction ATP + H2O + 4 H(+)(in) = ADP + phosphate + 5 H(+)(out). Its function is as follows. Produces ATP from ADP in the presence of a proton gradient across the membrane. The alpha chain is a regulatory subunit. This is ATP synthase subunit alpha 1 from Photobacterium profundum (strain SS9).